Consider the following 619-residue polypeptide: Magnesium-chelatase 67 kDa subunit (619 aa).

Position 33 to 40 (Ser-33 to Ser-40) interacts with ATP. The segment at Thr-273–Glu-321 is disordered. The segment covering Pro-280–Glu-321 has biased composition (acidic residues). One can recognise a VWFA domain in the interval Leu-431 to Ser-619.

It belongs to the Mg-chelatase subunits D/I family.

It catalyses the reaction protoporphyrin IX + Mg(2+) + ATP + H2O = Mg-protoporphyrin IX + ADP + phosphate + 3 H(+). It participates in porphyrin-containing compound metabolism; bacteriochlorophyll biosynthesis. In terms of biological role, involved in bacteriochlorophyll biosynthesis; introduces a magnesium ion into protoporphyrin IX to yield Mg-protoporphyrin IX. The polypeptide is Magnesium-chelatase 67 kDa subunit (bchD) (Chlorobaculum parvum (strain DSM 263 / NCIMB 8327) (Chlorobium vibrioforme subsp. thiosulfatophilum)).